The chain runs to 511 residues: Dopamine receptor 1 (511 aa).

Positions 1-19 (MYTPHPFGFLIILVPMTNA) are cleaved as a signal peptide. Residues 20–142 (MRAIAAIAAG…EEPEPLSLVS (123 aa)) lie on the Extracellular side of the membrane. Asparagine 53, asparagine 63, asparagine 74, asparagine 117, and asparagine 123 each carry an N-linked (GlcNAc...) asparagine glycan. The helical transmembrane segment at 143 to 169 (IVVVGIFLSVLIFLSVAGNILVCLAIY) threads the bilayer. The Cytoplasmic segment spans residues 170-179 (TERSLRRIGN). A helical transmembrane segment spans residues 180-206 (LFLASLAIADLFVASLVMTFAGVNDLL). The Extracellular portion of the chain corresponds to 207 to 216 (GYWIFGAQFC). An intrachain disulfide couples cysteine 216 to cysteine 302. A helical membrane pass occupies residues 217 to 239 (DTWVAFDVMCSTASILNLCAISM). The Cytoplasmic portion of the chain corresponds to 240 to 258 (DRYIHIKDPLRYGRWVTRR). The chain crosses the membrane as a helical span at residues 259–279 (VAVITIAAIWLLAAFVSFVPI). The Extracellular portion of the chain corresponds to 280–310 (SLGIHRPDQPLIFEDNGKKYPTCALDLTPTY). Residues 311 to 331 (AVVSSCISFYFPCVVMIGIYC) form a helical membrane-spanning segment. At 332-391 (RLYCYAQKHVKSIKAVTRPGEVAEKQRYKSIRRPKNQPKKFKVRNLHTHSSPYHVSDHKA) the chain is on the cytoplasmic side. The chain crosses the membrane as a helical span at residues 392 to 412 (AVTVGVIMGVFLICWVPFFCV). Residues 413–427 (NITAAFCKTCIGGQT) lie on the Extracellular side of the membrane. The helical transmembrane segment at 428-450 (FKILTWLGYSNSAFNPIIYSIFN) threads the bilayer. Residues 451-511 (KEFRDAFKRI…SAELEQVSAI (61 aa)) are Cytoplasmic-facing. Residues cysteine 468 and cysteine 469 are each lipidated (S-palmitoyl cysteine).

The protein belongs to the G-protein coupled receptor 1 family. Expressed in the larval and adult CNS in structures that mediate higher-order brain functions such as learning, memory and motor control: in the mushroom body neuropil and four unpaired neurons in each thoracic segment. The adult CNS has intense expression in the central complex, moderate expression in several neurosecretory cells, and weak expression in two unpaired neurons in the mesothoracic neuromere. Also seen in the somata of the optic lobes.

The protein resides in the cell membrane. Functionally, receptor for dopamine. The activity of this receptor is mediated by G proteins which activate adenylyl cyclase. Might be involved in the processing of visual information and/or visual learning. Important for Pavlovian conditioning: required in the mushroom body as a receptor conveying unconditional stimuli information, has a role in memory formation for aversive and appetitive learning. Sleep-deprivation-induced impairments in learning can be partially explained through alterations in dopamine signaling, Dop1R1 expression levels are reduced; sleep may have a role in restoring dopamine homeostasis. This is Dopamine receptor 1 (Dop1R1) from Drosophila melanogaster (Fruit fly).